A 338-amino-acid polypeptide reads, in one-letter code: tRNA N6-adenosine threonylcarbamoyltransferase (338 aa).

Residues His-110 and His-114 each contribute to the Fe cation site. Residues Ile-132–Gly-136, Asp-165, Gly-178, and Asn-274 contribute to the substrate site. Residue Asp-298 coordinates Fe cation.

Belongs to the KAE1 / TsaD family. It depends on Fe(2+) as a cofactor.

Its subcellular location is the cytoplasm. It carries out the reaction L-threonylcarbamoyladenylate + adenosine(37) in tRNA = N(6)-L-threonylcarbamoyladenosine(37) in tRNA + AMP + H(+). Required for the formation of a threonylcarbamoyl group on adenosine at position 37 (t(6)A37) in tRNAs that read codons beginning with adenine. Is involved in the transfer of the threonylcarbamoyl moiety of threonylcarbamoyl-AMP (TC-AMP) to the N6 group of A37, together with TsaE and TsaB. TsaD likely plays a direct catalytic role in this reaction. This chain is tRNA N6-adenosine threonylcarbamoyltransferase, found in Borrelia hermsii (strain HS1 / DAH).